We begin with the raw amino-acid sequence, 35 residues long: Photosystem II reaction center protein T (35 aa).

Residues 3 to 23 (ALVYTFLLISTLGIIFFAIFF) traverse the membrane as a helical segment.

The protein belongs to the PsbT family. In terms of assembly, PSII is composed of 1 copy each of membrane proteins PsbA, PsbB, PsbC, PsbD, PsbE, PsbF, PsbH, PsbI, PsbJ, PsbK, PsbL, PsbM, PsbT, PsbY, PsbZ, Psb30/Ycf12, at least 3 peripheral proteins of the oxygen-evolving complex and a large number of cofactors. It forms dimeric complexes.

It is found in the plastid. The protein resides in the chloroplast thylakoid membrane. Functionally, found at the monomer-monomer interface of the photosystem II (PS II) dimer, plays a role in assembly and dimerization of PSII. PSII is a light-driven water plastoquinone oxidoreductase, using light energy to abstract electrons from H(2)O, generating a proton gradient subsequently used for ATP formation. This Aristolochia macrophylla (Dutchman's pipe vine) protein is Photosystem II reaction center protein T.